Here is a 754-residue protein sequence, read N- to C-terminus: tRNA 5-methylaminomethyl-2-thiouridine biosynthesis bifunctional protein MnmC (754 aa).

Residues 1 to 320 are tRNA (mnm(5)s(2)U34)-methyltransferase; the sequence is MPSCYEHSAQ…RRQAVNNSDS (320 aa). The interval 324-754 is FAD-dependent cmnm(5)s(2)U34 oxidoreductase; that stretch reads IGGGIAGACL…RKLLKGKALC (431 aa).

It in the N-terminal section; belongs to the methyltransferase superfamily. tRNA (mnm(5)s(2)U34)-methyltransferase family. The protein in the C-terminal section; belongs to the DAO family. FAD is required as a cofactor.

The protein resides in the cytoplasm. It carries out the reaction 5-aminomethyl-2-thiouridine(34) in tRNA + S-adenosyl-L-methionine = 5-methylaminomethyl-2-thiouridine(34) in tRNA + S-adenosyl-L-homocysteine + H(+). Its function is as follows. Catalyzes the last two steps in the biosynthesis of 5-methylaminomethyl-2-thiouridine (mnm(5)s(2)U) at the wobble position (U34) in tRNA. Catalyzes the FAD-dependent demodification of cmnm(5)s(2)U34 to nm(5)s(2)U34, followed by the transfer of a methyl group from S-adenosyl-L-methionine to nm(5)s(2)U34, to form mnm(5)s(2)U34. This Shewanella denitrificans (strain OS217 / ATCC BAA-1090 / DSM 15013) protein is tRNA 5-methylaminomethyl-2-thiouridine biosynthesis bifunctional protein MnmC.